Reading from the N-terminus, the 1087-residue chain is 2'-5'-oligoadenylate synthase 3 (1087 aa).

Met-1 is modified (N-acetylmethionine). Residues Thr-6 to Pro-343 form an OAS domain 1 region. Interaction with dsRNA stretches follow at residues Asp-12–Thr-57 and Glu-186–Lys-200. Positions Gly-344–Gln-410 are linker. The residue at position 365 (Thr-365) is a Phosphothreonine. OAS domain regions lie at residues Ile-411–Val-742 and Thr-750–Lys-1084. Ser-804 is a binding site for ATP. The Mg(2+) site is built by Asp-816, Asp-818, and Asp-888. ATP is bound by residues Arg-947, Lys-950, and Gln-969.

The protein belongs to the 2-5A synthase family. As to quaternary structure, monomer. Mg(2+) serves as cofactor. Present at high level in placenta trophoblast.

It is found in the cytoplasm. Its subcellular location is the nucleus. The catalysed reaction is 3 ATP = 5'-triphosphoadenylyl-(2'-&gt;5')-adenylyl-(2'-&gt;5')-adenosine + 2 diphosphate. With respect to regulation, produced as a latent enzyme which is activated by dsRNA generated during the course of viral infection. Strongly activated by long dsRNAs at least 50 nucleotides in length. ssRNA does not activate the enzyme. Its function is as follows. Interferon-induced, dsRNA-activated antiviral enzyme which plays a critical role in cellular innate antiviral response. In addition, it may also play a role in other cellular processes such as apoptosis, cell growth, differentiation and gene regulation. Synthesizes preferentially dimers of 2'-5'-oligoadenylates (2-5A) from ATP which then bind to the inactive monomeric form of ribonuclease L (RNase L) leading to its dimerization and subsequent activation. Activation of RNase L leads to degradation of cellular as well as viral RNA, resulting in the inhibition of protein synthesis, thus terminating viral replication. Can mediate the antiviral effect via the classical RNase L-dependent pathway or an alternative antiviral pathway independent of RNase L. Displays antiviral activity against Chikungunya virus (CHIKV), Dengue virus, Sindbis virus (SINV) and Semliki forest virus (SFV). The polypeptide is 2'-5'-oligoadenylate synthase 3 (OAS3) (Homo sapiens (Human)).